Here is a 72-residue protein sequence, read N- to C-terminus: Large ribosomal subunit protein bL28 (72 aa).

Belongs to the bacterial ribosomal protein bL28 family.

This chain is Large ribosomal subunit protein bL28, found in Chlorobium luteolum (strain DSM 273 / BCRC 81028 / 2530) (Pelodictyon luteolum).